We begin with the raw amino-acid sequence, 565 residues long: Zinc finger protein 143 (565 aa).

7 consecutive C2H2-type zinc fingers follow at residues 230–254 (FRCDYEGCGKLYTTAHHLKVHERSH), 260–284 (YQCDHGSCRKAFATGYGLKSHVRTH), 290–314 (YRCSEENCTKSFKTSGDLQKHVRTH), 320–344 (FKCPFEGCGRSFTTSNIRKVHIRTH), 350–374 (YYCSEPGCGRAFASATNYKNHVRIH), 380–404 (YVCTVPGCDKRFTEYSSLYKHHVVH), and 410–433 (YNCNHCGKTYKQISTLAMHKRTAH).

The protein belongs to the GLI C2H2-type zinc-finger protein family.

The protein resides in the nucleus. Functionally, transcriptional activator. Activates the gene for selenocysteine tRNA (tRNAsec). Binds to the activator element (AE) motif of the selenocysteine tRNA gene promoter. The chain is Zinc finger protein 143 (znf143) from Xenopus laevis (African clawed frog).